The primary structure comprises 172 residues: uncharacterized protein (172 aa).

Helical transmembrane passes span 44 to 68 (VLVS…AALT), 86 to 110 (LASY…VFSL), and 117 to 135 (VVFI…VTLF).

The protein belongs to the chlamydial CPn_0442/CT_006/TC_0274 family.

Its subcellular location is the cell membrane. This is an uncharacterized protein from Chlamydia pneumoniae (Chlamydophila pneumoniae).